The sequence spans 247 residues: Flavin-dependent thymidylate synthase (247 aa).

The region spanning 1 to 237 (MRVRLLEATE…PHTFEYYDAE (237 aa)) is the ThyX domain. Residues 85-88 (QLTR), 98-100 (SMR), and arginine 176 each bind dUMP. Position 88 to 90 (88 to 90 (RHR)) interacts with FAD. Positions 88-98 (RHRHASFDVQS) match the ThyX motif motif. FAD is bound by residues 192–194 (NPR) and histidine 198. A dUMP-binding site is contributed by arginine 203. Residue arginine 203 is the Involved in ionization of N3 of dUMP, leading to its activation of the active site.

This sequence belongs to the thymidylate synthase ThyX family. As to quaternary structure, homotetramer. FAD serves as cofactor.

The catalysed reaction is dUMP + (6R)-5,10-methylene-5,6,7,8-tetrahydrofolate + NADPH + H(+) = dTMP + (6S)-5,6,7,8-tetrahydrofolate + NADP(+). It participates in pyrimidine metabolism; dTTP biosynthesis. Functionally, catalyzes the reductive methylation of 2'-deoxyuridine-5'-monophosphate (dUMP) to 2'-deoxythymidine-5'-monophosphate (dTMP) while utilizing 5,10-methylenetetrahydrofolate (mTHF) as the methyl donor, and NADPH and FADH(2) as the reductant. In Halobacterium salinarum (strain ATCC 700922 / JCM 11081 / NRC-1) (Halobacterium halobium), this protein is Flavin-dependent thymidylate synthase.